Consider the following 339-residue polypeptide: UDP-3-O-acylglucosamine N-acyltransferase (339 aa).

The active-site Proton acceptor is the H238.

It belongs to the transferase hexapeptide repeat family. LpxD subfamily. In terms of assembly, homotrimer.

The catalysed reaction is a UDP-3-O-[(3R)-3-hydroxyacyl]-alpha-D-glucosamine + a (3R)-hydroxyacyl-[ACP] = a UDP-2-N,3-O-bis[(3R)-3-hydroxyacyl]-alpha-D-glucosamine + holo-[ACP] + H(+). Its pathway is bacterial outer membrane biogenesis; LPS lipid A biosynthesis. Catalyzes the N-acylation of UDP-3-O-acylglucosamine using 3-hydroxyacyl-ACP as the acyl donor. Is involved in the biosynthesis of lipid A, a phosphorylated glycolipid that anchors the lipopolysaccharide to the outer membrane of the cell. This is UDP-3-O-acylglucosamine N-acyltransferase from Aeromonas hydrophila subsp. hydrophila (strain ATCC 7966 / DSM 30187 / BCRC 13018 / CCUG 14551 / JCM 1027 / KCTC 2358 / NCIMB 9240 / NCTC 8049).